We begin with the raw amino-acid sequence, 436 residues long: Glutamyl-tRNA reductase (436 aa).

Substrate contacts are provided by residues 49 to 52 (TCNR), Ser-109, 114 to 116 (EPQ), and Gln-120. Cys-50 (nucleophile) is an active-site residue. 189 to 194 (GAGEMC) provides a ligand contact to NADP(+).

This sequence belongs to the glutamyl-tRNA reductase family. Homodimer.

The catalysed reaction is (S)-4-amino-5-oxopentanoate + tRNA(Glu) + NADP(+) = L-glutamyl-tRNA(Glu) + NADPH + H(+). Its pathway is porphyrin-containing compound metabolism; protoporphyrin-IX biosynthesis; 5-aminolevulinate from L-glutamyl-tRNA(Glu): step 1/2. Catalyzes the NADPH-dependent reduction of glutamyl-tRNA(Glu) to glutamate 1-semialdehyde (GSA). The sequence is that of Glutamyl-tRNA reductase from Pelobacter propionicus (strain DSM 2379 / NBRC 103807 / OttBd1).